We begin with the raw amino-acid sequence, 339 residues long: Replication factor C subunit 2 (339 aa).

48-55 (YGPPGTGK) contributes to the ATP binding site.

The protein belongs to the activator 1 small subunits family. In terms of assembly, heterotetramer of subunits RFC2, RFC3, RFC4 and RFC5 that can form a complex with RFC1. As to expression, expressed in roots, leaves, shoot apical meristem (SAM), flag leaves and panicles.

It localises to the nucleus. In terms of biological role, may be involved in DNA replication and thus regulate cell proliferation. This chain is Replication factor C subunit 2 (RFC2), found in Oryza sativa subsp. japonica (Rice).